Reading from the N-terminus, the 235-residue chain is 7-cyano-7-deazaguanine synthase (235 aa).

16–26 (FSGGQDSTTCL) serves as a coordination point for ATP. Zn(2+) is bound by residues C193, C201, C204, and C207.

Belongs to the QueC family. The cofactor is Zn(2+).

The enzyme catalyses 7-carboxy-7-deazaguanine + NH4(+) + ATP = 7-cyano-7-deazaguanine + ADP + phosphate + H2O + H(+). It functions in the pathway purine metabolism; 7-cyano-7-deazaguanine biosynthesis. Its function is as follows. Catalyzes the ATP-dependent conversion of 7-carboxy-7-deazaguanine (CDG) to 7-cyano-7-deazaguanine (preQ(0)). This chain is 7-cyano-7-deazaguanine synthase, found in Actinobacillus succinogenes (strain ATCC 55618 / DSM 22257 / CCUG 43843 / 130Z).